Here is a 298-residue protein sequence, read N- to C-terminus: Apolipoprotein E (298 aa).

Residues 1-18 (MKVLWAALVVTLLAGCQA) form the signal peptide. Tandem repeats lie at residues 74-95 (LLME…QELA), 96-117 (PMAE…SRLR), 118-139 (ADME…TMMG), 140-161 (QSGE…KRLL), 162-183 (RDVE…EGAE), and 223-244 (GRLE…EQME). The interval 74–244 (LLMEDTMKEV…RLEEVREQME (171 aa)) is 8 X 22 AA approximate tandem repeats. Met137 carries the methionine sulfoxide modification. Phosphoserine is present on Ser141. Positions 152–162 (HLRKLRKRLLR) are LDL and other lipoprotein receptors binding. 156 to 159 (LRKR) serves as a coordination point for heparin. The lipid-binding and lipoprotein association stretch occupies residues 204–272 (SLPSQPLRER…SWFEPMMEDM (69 aa)). Residue 218–225 (GEQMRGRL) participates in heparin binding. The interval 260–272 (RFKSWFEPMMEDM) is specificity for association with VLDL.

Belongs to the apolipoprotein A1/A4/E family. Homotetramer. May interact with ABCA1; functionally associated with ABCA1 in the biogenesis of HDLs. May interact with APP/A4 amyloid-beta peptide; the interaction is extremely stable in vitro but its physiological significance is unclear. May interact with MAPT. May interact with MAP2. In the cerebrospinal fluid, interacts with secreted SORL1. Interacts with PMEL; this allows the loading of PMEL luminal fragment on ILVs to induce fibril nucleation. In terms of processing, APOE exists as multiple glycosylated and sialylated glycoforms within cells and in plasma. The extent of glycosylation and sialylation are tissue and context specific. Glycated in plasma VLDL. Post-translationally, phosphorylated by FAM20C in the extracellular medium.

The protein localises to the secreted. Its subcellular location is the extracellular space. It is found in the extracellular matrix. It localises to the extracellular vesicle. The protein resides in the endosome. The protein localises to the multivesicular body. APOE is an apolipoprotein, a protein associating with lipid particles, that mainly functions in lipoprotein-mediated lipid transport between organs via the plasma and interstitial fluids. APOE is a core component of plasma lipoproteins and is involved in their production, conversion and clearance. Apolipoproteins are amphipathic molecules that interact both with lipids of the lipoprotein particle core and the aqueous environment of the plasma. As such, APOE associates with chylomicrons, chylomicron remnants, very low density lipoproteins (VLDL) and intermediate density lipoproteins (IDL) but shows a preferential binding to high-density lipoproteins (HDL). It also binds a wide range of cellular receptors including the LDL receptor/LDLR, the LDL receptor-related proteins LRP1, LRP2 and LRP8 and the very low-density lipoprotein receptor/VLDLR that mediate the cellular uptake of the APOE-containing lipoprotein particles. Finally, APOE also has a heparin-binding activity and binds heparan-sulfate proteoglycans on the surface of cells, a property that supports the capture and the receptor-mediated uptake of APOE-containing lipoproteins by cells. A main function of APOE is to mediate lipoprotein clearance through the uptake of chylomicrons, VLDLs, and HDLs by hepatocytes. APOE is also involved in the biosynthesis by the liver of VLDLs as well as their uptake by peripheral tissues ensuring the delivery of triglycerides and energy storage in muscle, heart and adipose tissues. By participating in the lipoprotein-mediated distribution of lipids among tissues, APOE plays a critical role in plasma and tissues lipid homeostasis. APOE is also involved in two steps of reverse cholesterol transport, the HDLs-mediated transport of cholesterol from peripheral tissues to the liver, and thereby plays an important role in cholesterol homeostasis. First, it is functionally associated with ABCA1 in the biogenesis of HDLs in tissues. Second, it is enriched in circulating HDLs and mediates their uptake by hepatocytes. APOE also plays an important role in lipid transport in the central nervous system, regulating neuron survival and sprouting. The chain is Apolipoprotein E (APOE) from Dasyprocta punctata (Central American agouti).